The primary structure comprises 149 residues: Oligosaccharyltransferase complex subunit ostc (149 aa).

The Cytoplasmic portion of the chain corresponds to Met-1 to Thr-32. A helical membrane pass occupies residues Val-33 to Ile-53. The Extracellular segment spans residues Val-54–Tyr-83. A helical transmembrane segment spans residues Ile-84–Leu-104. Residues Asp-105–Arg-117 lie on the Cytoplasmic side of the membrane. The chain crosses the membrane as a helical span at residues Phe-118–Phe-138. The Extracellular portion of the chain corresponds to Met-139 to Gly-149.

It belongs to the OSTC family. Specific component of the STT3A-containing form of the oligosaccharyltransferase (OST) complex.

The protein localises to the membrane. Its pathway is protein modification; protein glycosylation. In terms of biological role, specific component of the STT3A-containing form of the oligosaccharyl transferase (OST) complex that catalyzes the initial transfer of a defined glycan (Glc(3)Man(9)GlcNAc(2) in eukaryotes) from the lipid carrier dolichol-pyrophosphate to an asparagine residue within an Asn-X-Ser/Thr consensus motif in nascent polypeptide chains, the first step in protein N-glycosylation. N-glycosylation occurs cotranslationally and the complex associates with the Sec61 complex at the channel-forming translocon complex that mediates protein translocation across the endoplasmic reticulum (ER). All subunits are required for a maximal enzyme activity. The polypeptide is Oligosaccharyltransferase complex subunit ostc (Danio rerio (Zebrafish)).